A 421-amino-acid chain; its full sequence is NADP(+)-dependent glutamate dehydrogenase (421 aa).

Residues Lys-70 and Lys-94 each contribute to the substrate site. Lys-106 (proton donor) is an active-site residue. 2 residues coordinate NADP(+): Thr-190 and Asn-221. Residue Ser-354 participates in substrate binding.

Belongs to the Glu/Leu/Phe/Val dehydrogenases family. As to quaternary structure, homohexamer.

It carries out the reaction L-glutamate + NADP(+) + H2O = 2-oxoglutarate + NH4(+) + NADPH + H(+). Is not regulated allosterically. Activity is inhibited in the presence of high ionic strength; the inhibitory effect of KCl is slightly higher than that of NaCl. Functionally, catalyzes the reversible oxidative deamination of L-glutamate to 2-oxoglutarate and ammonia, thereby playing a key role at the intersection of the carbon and nitrogen metabolic pathways. Shows a high preference for NADP(+)/NADPH as the acceptor/donor over NAD(+)/NADH. May function in vivo in the synthetic direction. Also catalyzes at very low rates the oxidative deamination of L-2-aminobutyrate, and the reductive amination of 2-oxovalerate and 2-oxobutyrate. The polypeptide is NADP(+)-dependent glutamate dehydrogenase (Pyrobaculum calidifontis (strain DSM 21063 / JCM 11548 / VA1)).